Here is a 75-residue protein sequence, read N- to C-terminus: uncharacterized protein (75 aa).

This is an uncharacterized protein from Escherichia coli O6:H1 (strain CFT073 / ATCC 700928 / UPEC).